We begin with the raw amino-acid sequence, 538 residues long: Neutral protease B (538 aa).

A signal peptide spans 1-28; it reads MRNLTKTSLLLAGLCTAAQMVFVTHASA. A propeptide spans 29–223 (activation peptide); sequence EESIEYDHTY…VIESFNAIHE (195 aa). Ca(2+) is bound at residue Asp-365. His-369 lines the Zn(2+) pocket. Glu-370 is a catalytic residue. Residues His-373 and Glu-393 each contribute to the Zn(2+) site. Ca(2+) contacts are provided by Asp-404, Asp-406, Asp-407, Glu-409, Glu-412, Tyr-415, Thr-416, Ile-419, and Asp-422. Residues 421 to 441 form a disordered region; that stretch reads GDSLRSLEDPSKQGNPDHYSN. His-453 serves as the catalytic Proton donor.

The protein belongs to the peptidase M4 family. The cofactor is Zn(2+).

It localises to the secreted. Its activity is regulated as follows. Protease activity can be inhibited in vitro by either a zinc specific chelator, 1,10-phenanthroline, or a metal chelator, EDTA. The enzyme is resistant to phenylmethylsulfonyl fluoride and iodoacetic acid. Functionally, protease able to cleave casein in vitro. The sequence is that of Neutral protease B from Bacillus subtilis (strain 168).